The primary structure comprises 489 residues: Retinoblastoma-binding protein 5 homolog (489 aa).

WD repeat units follow at residues 22 to 63, 64 to 103, 147 to 187, 195 to 234, 248 to 290, and 292 to 330; these read DCIS…KIIS, AHVHPVCSLSWTRNGHKLLSASTDNNVCIWDVLTGELEHK, DSDG…VVAS, SSATAVKSIEFARRGDAFLINTSDRVIRVYDSKEIITLGK, VNKT…KILH, and TKGELLLDVVWHPVRPIIASISSGLVSIWAQNQVENWSA. Residues 451 to 489 are disordered; the sequence is DVSLPDAPTDETHPLISSKASKDKQQPVGGKKAAGRTKK.

As to quaternary structure, core component of several methyltransferase-containing complexes. Component of the SET1 complex, composed at least of the catalytic subunit Set1, wds/WDR5, Wdr82, Rbbp5, ash2, Cfp1/CXXC1, hcf and Dpy-30L1. Component of the MLL3/4 complex composed at least of the catalytic subunit trr, ash2, Rbbp5, Dpy-30L1, wds, hcf, ptip, Pa1, Utx, Lpt and Ncoa6.

It is found in the nucleus. In terms of biological role, component of the SET1 complex that specifically di- and trimethylates 'Lys-4' of histone H3 and of the MLL3/4 complex which also methylates histone H3 'Lys-4'. The chain is Retinoblastoma-binding protein 5 homolog from Drosophila melanogaster (Fruit fly).